A 500-amino-acid polypeptide reads, in one-letter code: L-arabinose isomerase (500 aa).

Residues E306, E333, H350, and H450 each contribute to the Mn(2+) site.

Belongs to the arabinose isomerase family. Homohexamer. Mn(2+) serves as cofactor.

The enzyme catalyses beta-L-arabinopyranose = L-ribulose. It participates in carbohydrate degradation; L-arabinose degradation via L-ribulose; D-xylulose 5-phosphate from L-arabinose (bacterial route): step 1/3. Catalyzes the conversion of L-arabinose to L-ribulose. This Escherichia coli O17:K52:H18 (strain UMN026 / ExPEC) protein is L-arabinose isomerase.